Here is a 2181-residue protein sequence, read N- to C-terminus: Non-reducing polyketide synthase subA (2181 aa).

The segment at 74 to 180 (QWVKGNSTQP…LALCCGAYID (107 aa)) is N-terminal acylcarrier protein transacylase domain (SAT). Positions 347 to 779 (QAQLLVLGPV…GTNAAMLVCQ (433 aa)) constitute a Ketosynthase family 3 (KS3) domain. Residues Cys-525, His-661, and His-702 each act as for beta-ketoacyl synthase activity in the active site. Positions 891-1193 (VLAGQTGRRV…SFYPAALGEP (303 aa)) are malonyl-CoA:ACP transacylase (MAT) domain. Catalysis depends on Ser-977, which acts as the For acyl/malonyl transferase activity. Residues 1269–1401 (VSLIGKTQNA…GVITLQEVYS (133 aa)) are N-terminal hotdog fold. The region spanning 1269–1579 (VSLIGKTQNA…FQKIAISSLK (311 aa)) is the PKS/mFAS DH domain. Positions 1276–1573 (QNAGVQTVEY…TILGAKFQKI (298 aa)) are product template (PT) domain. The interval 1425-1579 (SASVVQGDFI…FQKIAISSLK (155 aa)) is C-terminal hotdog fold. Positions 1652–1673 (ISGSSRSTSSSPPSLESRSQAM) are disordered. Low complexity predominate over residues 1653–1670 (SGSSRSTSSSPPSLESRS). Positions 1677–1753 (EITEGAGSAL…TLFHTIFPQQ (77 aa)) constitute a Carrier domain. Ser-1713 is modified (O-(pantetheine 4'-phosphoryl)serine). The methyltransferase (CMeT) domain stretch occupies residues 1982–2164 (EFMNCLFSYN…QSGFGHVDWT (183 aa)).

It functions in the pathway secondary metabolite biosynthesis; terpenoid biosynthesis. Its function is as follows. Non-reducing polyketide synthase; part of the gene cluster that mediates the biosynthesis of the immunosuppressants subglutinols, meroterpenoids consisting of an alpha-pyrone (4-hydroxy-5,6-dimethyl-2-pyrone) moiety attached to a decalin core fused to a five-membered cyclic ether carrying a prenylside chain. The first step of the pathway is the synthesis of the alpha-pyrone moiety by the polyketide synthase subA via condensation of one acetyl-CoA starter unit with 3 malonyl-CoA units and 2 methylations. The alpha-pyrone is then combined with geranylgeranyl pyrophosphate (GGPP) formed by the GGPP synthase subD through the action of the prenyltransferase subC to yield a linear alpha-pyrone diterpenoid. Subsequent steps in the subglutinol biosynthetic pathway involve the decalin core formation, which is thought to be initiated by the epoxidation of the C10-C11 olefin by the FAD-dependent oxidoreductase subE. The following cyclization cascade would be catalyzed by the terpene cyclase subB. Lastly, the FAD-dependent dehydrogenase subF probably catalyzes the five-membered cyclic ether formation to complete the formation of subglutinol A. Subsequent redox reactions appear to give rise to subglutinol C and D, however, it remains unclear which enzymes are responsible for these transformations. SubD may have secondary function in the conversion of the identified subglutinols to subglutinol analog 45, which seems to be the major product of the cluster. The chain is Non-reducing polyketide synthase subA from Metarhizium robertsii (strain ARSEF 23 / ATCC MYA-3075) (Metarhizium anisopliae (strain ARSEF 23)).